The primary structure comprises 705 residues: Elongation factor G (705 aa).

Residues 8–294 enclose the tr-type G domain; that stretch reads DRYRNFGIMA…AVIDYLPSPL (287 aa). Residues 17–24, 92–96, and 146–149 contribute to the GTP site; these read AHIDAGKT, DTPGH, and NKMD.

This sequence belongs to the TRAFAC class translation factor GTPase superfamily. Classic translation factor GTPase family. EF-G/EF-2 subfamily.

The protein resides in the cytoplasm. Functionally, catalyzes the GTP-dependent ribosomal translocation step during translation elongation. During this step, the ribosome changes from the pre-translocational (PRE) to the post-translocational (POST) state as the newly formed A-site-bound peptidyl-tRNA and P-site-bound deacylated tRNA move to the P and E sites, respectively. Catalyzes the coordinated movement of the two tRNA molecules, the mRNA and conformational changes in the ribosome. In Dinoroseobacter shibae (strain DSM 16493 / NCIMB 14021 / DFL 12), this protein is Elongation factor G.